The sequence spans 2476 residues: Zonadhesin (2476 aa).

A signal peptide spans 1–29 (MLGLPALAGPMAMPHPPLIPSTPTLLAFS). Residues 30–2418 (FPGGFYMLLD…SPKKPEASNR (2389 aa)) lie on the Extracellular side of the membrane. 2 consecutive MAM domains span residues 31–144 (PGGF…PCEE) and 147–312 (PQCD…TCRG). 2 N-linked (GlcNAc...) asparagine glycosylation sites follow: asparagine 109 and asparagine 269. 3 disordered regions span residues 313–332 (PSET…KPTV), 358–462 (PTVP…TERT), and 537–632 (ERTT…RTTI). The tract at residues 319-687 (STEKPVAPTE…ATTVTPRTTI (369 aa)) is 53 X approximate heptapeptide repeats (mucin-like domain). The span at 358–373 (PTVPTEKPTIPTEKST) shows a compositional bias: low complexity. Over residues 400 to 412 (TTPPEGPAVPPKG) the composition is skewed to pro residues. Residues 423–433 (HTEKSTVHTEK) are compositionally biased toward basic and acidic residues. Residues 451-462 (PTKRTTTPTERT) are compositionally biased toward low complexity. The TIL 1 domain occupies 690 to 739 (CPPNAHFERCACPVSCQSPTPNCELFCKPGCVCDPGFLFSGSHCVNASSC). N-linked (GlcNAc...) asparagine glycosylation is found at asparagine 735, asparagine 758, and asparagine 833. One can recognise a VWFC 1 domain in the interval 740–794 (DCFYNDNYYKLGTDWFSPNCTEHCHCRPSSRMECQTFKCGTHTVCQLKNGQYGCH). Residues 799 to 976 (ATCSVYGDPH…TSEDADQQCE (178 aa)) form the VWFD 1 domain. 2 disulfide bridges follow: cysteine 801–cysteine 936 and cysteine 823–cysteine 975. The interval 943–983 (SSNDNQKPDGSPAKDEKELGSSWQTSEDADQQCEENQVSPP) is disordered. The 54-residue stretch at 1070 to 1123 (CPRNSRYTLCARLCPDTCHSEFSGRACKDRCVEGCECDPGFVLSGLQCVSRSEC) folds into the TIL 2 domain. Residues 1124-1180 (GCLDSTAGYVKVGERWFKPGCRQLCICEGNNRTRCVLWRCQAQEFCGQQDGIYGCHA) form the VWFC 2 domain. An N-linked (GlcNAc...) asparagine glycan is attached at asparagine 1154. In terms of domain architecture, VWFD 2 spans 1184–1364 (ATCTVSGDPH…INELSEPGCF (181 aa)). Disulfide bonds link cysteine 1186–cysteine 1324 and cysteine 1208–cysteine 1363. N-linked (GlcNAc...) asparagine glycans are attached at residues asparagine 1329 and asparagine 1448. Residues 1456–1511 (CPSGSSYSTCANPCPATCLSLNNPSYCPSTLPCAEGCECQKGHILSGTSCVPLSQC) enclose the TIL 3 domain. Residues 1512-1568 (GCTTQRGSYHPVGESWYTDNSCSRLCTCSAHNNISCRQASCKPSQMCWPQDGLIRCR) enclose the VWFC 3 domain. N-linked (GlcNAc...) asparagine glycosylation is found at asparagine 1544, asparagine 1596, and asparagine 1654. A VWFD 3 domain is found at 1573-1751 (GVCRIPDTSH…RDKEIDPNCQ (179 aa)). 2 disulfides stabilise this stretch: cysteine 1575-cysteine 1712 and cysteine 1597-cysteine 1750. Residues 1747–1759 (DPNCQEDDRKTEA) are compositionally biased toward basic and acidic residues. Residues 1747-1768 (DPNCQEDDRKTEAESQEQPSAN) are disordered. An N-linked (GlcNAc...) asparagine glycan is attached at asparagine 1843. Residues 1851 to 1907 (CSAHSVYTSCVPSCLPSCQDPEGQCTGAGAPSTCEEGCICEPGYVLSEQQCVARSQC) form the TIL 4 domain. Residues 1908 to 1963 (GCRDARGTFLPVGRFRLSSGCSQMCVCTAGAIECRPFTCPSGSQCEPNEDGKDFCQ) enclose the VWFC 4 domain. An N-linked (GlcNAc...) asparagine glycan is attached at asparagine 1965. One can recognise a VWFD 4 domain in the interval 1968–2145 (NLCSVFGDPH…WEVKAKEGHP (178 aa)). A disulfide bridge connects residues cysteine 1970 and cysteine 2107. N-linked (GlcNAc...) asparagine glycans are attached at residues asparagine 2122, asparagine 2165, and asparagine 2178. Residues 2257 to 2310 (CPANTVYQSCMTPCPASCATLAVPRACDGPCVEGCASLPGYIYSGAQSLPMAHC) form the TIL 5 domain. The VWFC 5 domain occupies 2311 to 2365 (GCTNNGVYYQQGDSFVTENCSQRCTCASSGVLLCEPLSCRPGEICTLGNLTRGCF). N-linked (GlcNAc...) asparagine glycosylation is found at asparagine 2329 and asparagine 2359. The EGF-like domain maps to 2366–2402 (RDSPCLQNPCQNDGRCREQGTHFTCECELGYGGDLCT). 3 disulfides stabilise this stretch: cysteine 2370–cysteine 2381, cysteine 2375–cysteine 2390, and cysteine 2392–cysteine 2401. A helical transmembrane segment spans residues 2419 to 2439 (VAILLGMLMPTVLLVPAVTRV). A disordered region spans residues 2438-2476 (RVSRKRRRRRRPSRERTQSQNRGKRAGTDCAPEQAYKVA). A compositionally biased stretch (basic residues) spans 2439–2450 (VSRKRRRRRRPS). The Cytoplasmic portion of the chain corresponds to 2440–2476 (SRKRRRRRRPSRERTQSQNRGKRAGTDCAPEQAYKVA).

As to quaternary structure, probably forms covalent oligomers. Post-translationally, the MAM domains and the mucin-like domains are missing from the zonadhesin that binds to the egg extracellular matrix. Processing might occur during sperm maturation and/or capacitation. In testis, primarily in haploid spermatids. Not in lung, liver, heart, spleen, brain, kidney, epididymis.

It localises to the cell membrane. Binds in a species-specific manner to the zona pellucida of the egg. May be involved in gamete recognition and/or signaling. The polypeptide is Zonadhesin (ZAN) (Sus scrofa (Pig)).